The sequence spans 160 residues: UPF0262 protein Oant_0325 (160 aa).

It belongs to the UPF0262 family.

In Brucella anthropi (strain ATCC 49188 / DSM 6882 / CCUG 24695 / JCM 21032 / LMG 3331 / NBRC 15819 / NCTC 12168 / Alc 37) (Ochrobactrum anthropi), this protein is UPF0262 protein Oant_0325.